The following is a 619-amino-acid chain: Glucokinase regulatory protein (619 aa).

2 consecutive SIS domains span residues V90–N283 and T319–K498. C107–T109 is a keto-D-fructose 6-phosphate binding site. Residues T109–S110, E153, S179–G181, and E347 contribute to the beta-D-fructose 1-phosphate site. Residues S179–S183 and E347 contribute to the keto-D-fructose 6-phosphate site. An essential for interaction with GCK region spans residues I462–F464. Keto-D-fructose 6-phosphate is bound at residue K513. K513 lines the beta-D-fructose 1-phosphate pocket.

This sequence belongs to the GCKR family. In terms of assembly, interacts (fructose 6-phosphate bound form) with gck.

The protein resides in the nucleus. The protein localises to the cytoplasm. Its subcellular location is the mitochondrion. In terms of biological role, regulates glucokinase (gck) by forming an inactive complex with this enzyme. The affinity of gckr for gck is modulated by fructose metabolites: gckr with bound fructose 6-phosphate has increased affinity for gck, while gckr with bound fructose 1-phosphate has strongly decreased affinity for gck and does not inhibit gck activity. The sequence is that of Glucokinase regulatory protein from Xenopus laevis (African clawed frog).